The following is a 465-amino-acid chain: MSNKMWGGRFTDRPDAIMEEINVSIDVDRHLYAQDIAASKAHAAMLAAQGIITANDAKNIGKGLDTILSEIGAGKFTFKRALEDIHMNVESRLAELIGPAAGRLHTARSRNDQVATDFRLYVRDVLDETDAALASFQRALVERALEHAETVMPGFTHLQTAQPVTFGHHLMAYVEMAARDRGRFQDARKRLNESPLGAAALAGTSFPIDRHATAKKLGFDRPMANSLDAVSDRDFVLETLSAASICAVHLSRFAEEIVIWTSPLVGLVRLSDKFTTGSSIMPQKRNPDAAELVRAKTGRVIGALNGLLIVMKGLPLAYQKDMQEDKQGAMEGFAALSLAIRAMTGMVRDIVPEQDRMRAAAGEGYATATDLADWLVRTLKMPFRDAHHVTGKIVGLAAKAGVALHELPLKEMQAVEPKISRDALAVLSVESSVKSRTSYGGTAPKNVRAQAKAWLKRLEKEQKLG.

This sequence belongs to the lyase 1 family. Argininosuccinate lyase subfamily.

It is found in the cytoplasm. The catalysed reaction is 2-(N(omega)-L-arginino)succinate = fumarate + L-arginine. It functions in the pathway amino-acid biosynthesis; L-arginine biosynthesis; L-arginine from L-ornithine and carbamoyl phosphate: step 3/3. The protein is Argininosuccinate lyase of Rhodopseudomonas palustris (strain BisB5).